A 301-amino-acid polypeptide reads, in one-letter code: Probable alpha-L-glutamate ligase (301 aa).

The region spanning 104–287 (LQLLSRRGVG…VAGLIIQYLE (184 aa)) is the ATP-grasp domain. ATP is bound by residues Lys141, 178 to 179 (EY), Asp187, and 211 to 213 (RSN). Residues Asp248, Glu260, and Asn262 each contribute to the Mg(2+) site. Residues Asp248, Glu260, and Asn262 each coordinate Mn(2+).

Belongs to the RimK family. Requires Mg(2+) as cofactor. Mn(2+) serves as cofactor.

The polypeptide is Probable alpha-L-glutamate ligase (Stutzerimonas stutzeri (strain A1501) (Pseudomonas stutzeri)).